The sequence spans 199 residues: Guanylyl cyclase-activating protein 1 (199 aa).

The N-myristoyl glycine moiety is linked to residue glycine 2. Residue asparagine 3 is modified to Deamidated asparagine. 4 EF-hand domains span residues 13-48 (SATECHQWYKKFMTECPSGQLTLYEFKQFFGLKNLS), 50-85 (SANKYVEQMFETFDFNKDGYIDFMEYVAALSLVLKG), 86-121 (KVDQKLRWYFKLYDVDGNGCIDRGELLNIIKAIRAI), and 129-164 (TAEEFTNMVFDKIDINGDGELSLEEFMEGVQKDEVL). Aspartate 63, asparagine 65, aspartate 67, tyrosine 69, glutamate 74, aspartate 99, aspartate 101, asparagine 103, cysteine 105, glutamate 110, aspartate 142, asparagine 144, aspartate 146, glutamate 148, and glutamate 153 together coordinate Ca(2+).

As to expression, retina, in rod and cone outer segments, and pineal gland.

In terms of biological role, stimulates retinal guanylyl cyclase when free calcium ions concentration is low and inhibits guanylyl cyclase when free calcium ions concentration is elevated. This Ca(2+)-sensitive regulation of retinal guanylyl cyclase is a key event in recovery of the dark state of rod photoreceptors following light exposure. This chain is Guanylyl cyclase-activating protein 1 (GUCA1A), found in Gallus gallus (Chicken).